A 338-amino-acid chain; its full sequence is Ketol-acid reductoisomerase (NADP(+)) (338 aa).

The KARI N-terminal Rossmann domain maps to 1–181; the sequence is MNVFYDKDAD…GGGRAGIIET (181 aa). NADP(+)-binding positions include 24–27, Arg-47, and Ser-52; that span reads YGSQ. Residue His-107 is part of the active site. Gly-133 is a binding site for NADP(+). The region spanning 182–327 is the KARI C-terminal knotted domain; sequence NFREETETDL…AKLRAMMPWI (146 aa). 4 residues coordinate Mg(2+): Asp-190, Glu-194, Glu-226, and Glu-230. Ser-251 provides a ligand contact to substrate.

This sequence belongs to the ketol-acid reductoisomerase family. Mg(2+) serves as cofactor.

It catalyses the reaction (2R)-2,3-dihydroxy-3-methylbutanoate + NADP(+) = (2S)-2-acetolactate + NADPH + H(+). It carries out the reaction (2R,3R)-2,3-dihydroxy-3-methylpentanoate + NADP(+) = (S)-2-ethyl-2-hydroxy-3-oxobutanoate + NADPH + H(+). It functions in the pathway amino-acid biosynthesis; L-isoleucine biosynthesis; L-isoleucine from 2-oxobutanoate: step 2/4. Its pathway is amino-acid biosynthesis; L-valine biosynthesis; L-valine from pyruvate: step 2/4. Involved in the biosynthesis of branched-chain amino acids (BCAA). Catalyzes an alkyl-migration followed by a ketol-acid reduction of (S)-2-acetolactate (S2AL) to yield (R)-2,3-dihydroxy-isovalerate. In the isomerase reaction, S2AL is rearranged via a Mg-dependent methyl migration to produce 3-hydroxy-3-methyl-2-ketobutyrate (HMKB). In the reductase reaction, this 2-ketoacid undergoes a metal-dependent reduction by NADPH to yield (R)-2,3-dihydroxy-isovalerate. The chain is Ketol-acid reductoisomerase (NADP(+)) from Burkholderia lata (strain ATCC 17760 / DSM 23089 / LMG 22485 / NCIMB 9086 / R18194 / 383).